A 396-amino-acid chain; its full sequence is MSDILLELLCVSEKAANIARACRQQETLFQLLIEEKKGAEKNKKFAADFKTLADVLVQEVIKQNMENKFPGLGKKVFGEESNEFTNDLGEKITVELQSTEEETAELLSKVLNGNMPASEALAQVVHEDVDLTDPTLESLDISIPHESLGIWVDPIDSTYQYIKGSANVKSNQGIFPSGLQCVTILIGVYDLQTGLPLMGVINQPFASQNLTTLRWKGQCYWGLSYMGTNIHSLQLAISKSDSETQTENSDREFSSPFSAVISTSEKDTIKAALSRVCGGSVFPAAGAGYKSLCVIQGLADIYIFSEDTTYKWDSCAAHAILRAMGGGIVDMKECLERSPDTGLDLPQLLYHVENKGASGVELWANKGGLIAYRSRNRLDTFLSRLIQNLGPVKTQA.

Residue D54 participates in Li(+) binding. E79 contacts Mg(2+). E80 provides a ligand contact to Li(+). Mg(2+) is bound by residues D153 and I155. Residues D156, S157, T158, S264, K266, G286, A287, K290, and T308 each coordinate 1D-myo-inositol 1,4-bisphosphate. A Mg(2+)-binding site is contributed by D313. S314 carries the phosphoserine modification.

This sequence belongs to the inositol monophosphatase superfamily. As to quaternary structure, monomer. Requires Mg(2+) as cofactor.

It carries out the reaction 1D-myo-inositol 1,4-bisphosphate + H2O = 1D-myo-inositol 4-phosphate + phosphate. The enzyme catalyses 1D-myo-inositol 1,3,4-trisphosphate + H2O = 1D-myo-inositol 3,4-bisphosphate + phosphate. It participates in signal transduction; phosphatidylinositol signaling pathway. Its activity is regulated as follows. Inhibited by Li(+). Functionally, mg(2+)-dependent phosphatase that catalyzes the hydrolysis of the 1-position phosphate from inositol 1,4-bisphosphate and inositol 1,3,4-trisphosphate and participates in inositol phosphate metabolism. This is Inositol polyphosphate 1-phosphatase from Mus musculus (Mouse).